Consider the following 433-residue polypeptide: ATP-dependent RNA helicase SUB2 (433 aa).

Residues 49–77 (TGFRDFLLKPELLRAIGDCGFEHPSEVQQ) carry the Q motif motif. The Helicase ATP-binding domain maps to 80–255 (IPQSILGTDV…KKFMQNPLEI (176 aa)). 93–100 (AKSGLGKT) serves as a coordination point for ATP. Positions 202–205 (DECD) match the DEAD box motif. The Helicase C-terminal domain maps to 267 to 428 (GLQQYYIKLE…EFPEEGVDPS (162 aa)).

This sequence belongs to the DEAD box helicase family. DECD subfamily.

The protein localises to the nucleus. It carries out the reaction ATP + H2O = ADP + phosphate + H(+). ATP-binding RNA helicase involved in transcription elongation and required for the export of mRNA out of the nucleus. SUB2 also plays a role in pre-mRNA splicing and spliceosome assembly. May be involved in rDNA and telomeric silencing, and maintenance of genome integrity. The protein is ATP-dependent RNA helicase SUB2 (SUB2) of Scheffersomyces stipitis (strain ATCC 58785 / CBS 6054 / NBRC 10063 / NRRL Y-11545) (Yeast).